The sequence spans 985 residues: Serine/threonine-protein kinase N2 (985 aa).

Residues 33–109 (KLDFSDTIVQ…LQELNAHIVV (77 aa)) enclose the REM-1 1 domain. Lys77 bears the N6-acetyllysine mark. At Ser110 the chain carries Phosphoserine. Residues 111 to 136 (DPEDYTDCPRTPDTPNSDSRSSTSNN) are disordered. Phosphothreonine occurs at positions 121 and 124. A compositionally biased stretch (low complexity) spans 121-136 (TPDTPNSDSRSSTSNN). REM-1 domains lie at 121–204 (TPDT…TNEL) and 207–286 (DNAK…ELPK). A phosphoserine mark is found at Ser303, Ser307, Ser361, and Ser363. The segment at 352 to 383 (ATSVALPGWSPSENRSSFMSRTSKSKSGSSRN) is disordered. The C2 domain maps to 354–474 (SVALPGWSPS…LYLEPQGTLF (121 aa)). The segment covering 366 to 382 (RSSFMSRTSKSKSGSSR) has biased composition (low complexity). Residues 383–464 (NLLKTDDLSN…FLDNQRHGMA (82 aa)) are necessary to rescue apical junction formation. A phosphoserine mark is found at Ser536, Ser584, Ser621, and Ser632. Residues 570–590 (DLEPEAPPAPPRASSLGEIDD) form a disordered region. The region spanning 658–917 (FRCCAVLGRG…AEDVKKHPFF (260 aa)) is the Protein kinase domain. ATP contacts are provided by residues 664-672 (LGRGHFGKV) and Lys687. Catalysis depends on Asp783, which acts as the Proton acceptor. Thr817 carries the post-translational modification Phosphothreonine; by PDPK1. The segment at 918-978 (RLTDWSALLD…EEEQEMFRDF (61 aa)) is necessary for the catalytic activity. In terms of domain architecture, AGC-kinase C-terminal spans 918-985 (RLTDWSALLD…RDFDYVADWC (68 aa)). Ser953 bears the Phosphoserine mark. Residue Thr959 is modified to Phosphothreonine. A negatively regulates the responsiveness of the catalytic activity by cardiolipin and is required for optimal activation by the GTP-bound RhoA region spans residues 979 to 985 (DYVADWC).

Belongs to the protein kinase superfamily. AGC Ser/Thr protein kinase family. PKC subfamily. Interacts (via the REM repeats) with RHOA (GTP-bound form preferentially) and interacts (via the REM repeats) with RAC1 (GTP-bound form preferentially); the interactions induce its autophosphorylation. Interacts with RHOC. Interacts with NCK1 (via SH3 domains) and NCK2. Interacts with CD44. Interacts (via C-terminal kinase domain) with PDPK1; the interaction stimulates PDPK1 kinase activity. Interacts with MAP3K2; the interaction activates PRK2 kinase activity in a MAP3K2-independent kinase activity. Interacts (via C-terminal domain) with AKT1; the interaction occurs with the C-terminal cleavage product of PRK2 in apoptotic cells. Interacts (via C-terminus) with PTPN13 (via PDZ 3 domain). Interacts with CDK10. In terms of processing, phosphorylated during mitosis. Autophosphorylated. Phosphorylated. Binding to Rho and Rac promotes autophosphorylation and phosphorylation on serine and threonine residues. Phosphorylated by CDK10. Post-translationally, proteolytically cleaved by caspase-3 during the induction of apoptotic cell death. Activated by limited proteolysis with trypsin. In terms of tissue distribution, expressed in liver (at protein level).

Its subcellular location is the cytoplasm. It is found in the nucleus. The protein resides in the membrane. It localises to the cell projection. The protein localises to the lamellipodium. Its subcellular location is the cytoskeleton. It is found in the cleavage furrow. The protein resides in the midbody. It localises to the cell junction. The enzyme catalyses L-seryl-[protein] + ATP = O-phospho-L-seryl-[protein] + ADP + H(+). It carries out the reaction L-threonyl-[protein] + ATP = O-phospho-L-threonyl-[protein] + ADP + H(+). Its activity is regulated as follows. Kinase activity is activated upon binding to GTP-bound Rho1/Rac1 GTPases. Activated by caspase-3 (CASP3) cleavage during apoptosis. Activated by lipids, particularly cardiolipin and to a lesser extent by other acidic phospholipids and unsaturated fatty acids. Two specific sites, Thr-817 (activation loop of the kinase domain) and Thr-959 (turn motif), need to be phosphorylated for its full activation. PKC-related serine/threonine-protein kinase and Rho/Rac effector protein that participates in specific signal transduction responses in the cell. Plays a role in the regulation of cell cycle progression, actin cytoskeleton assembly, cell migration, cell adhesion, tumor cell invasion and transcription activation signaling processes. Phosphorylates CTTN in hyaluronan-induced astrocytes and hence decreases CTTN ability to associate with filamentous actin. Phosphorylates HDAC5, therefore lead to impair HDAC5 import. Direct RhoA target required for the regulation of the maturation of primordial junctions into apical junction formation in bronchial epithelial cells. Required for G2/M phases of the cell cycle progression and abscission during cytokinesis in a ECT2-dependent manner. Stimulates FYN kinase activity that is required for establishment of skin cell-cell adhesion during keratinocytes differentiation. Regulates epithelial bladder cells speed and direction of movement during cell migration and tumor cell invasion. Inhibits Akt pro-survival-induced kinase activity. Mediates Rho protein-induced transcriptional activation via the c-fos serum response factor (SRF). Involved in the negative regulation of ciliogenesis. The protein is Serine/threonine-protein kinase N2 (Pkn2) of Rattus norvegicus (Rat).